The chain runs to 424 residues: Mitogen-activated protein kinase 9 (424 aa).

Residues 26–321 (YQQLKPIGSG…VDEALRHPYI (296 aa)) form the Protein kinase domain. Residues 32–40 (IGSGAQGIV) and K55 each bind ATP. D151 functions as the Proton acceptor in the catalytic mechanism. T183 is modified (phosphothreonine; by MAP2K7). A TXY motif is present at residues 183-185 (TPY). The residue at position 185 (Y185) is a Phosphotyrosine; by MAP2K4. The tract at residues 368 to 424 (KNGVVKDQPSDAAVSSNATPSQSSSINDISSMSTEQTLASDTDSSLDASTGPLEGCR) is disordered. Over residues 388-417 (SQSSSINDISSMSTEQTLASDTDSSLDAST) the composition is skewed to low complexity.

The protein belongs to the protein kinase superfamily. CMGC Ser/Thr protein kinase family. MAP kinase subfamily. As to quaternary structure, interacts with MECOM. Interacts with DCLK2. Binds to at least four scaffolding proteins, MAPK8IP1/JIP-1, MAPK8IP2/JIP-2, MAPK8IP3/JIP-3/JSAP1 and SPAG9/MAPK8IP4/JIP-4. These proteins also bind other components of the JNK signaling pathway. Interacts with NFATC4. Interacts with ATF7; the interaction does not phosphorylate ATF7 but acts as a docking site for ATF7-associated partners such as JUN. Interacts with BCL10. Interacts with CTNNB1 and GSK3B. Interacts with MAPKBP1. Interacts with POU5F1; phosphorylates POU5F1 at 'Ser-355'. Found in a complex with SH3RF1, RAC2, MAP3K7/TAK1, MAP2K7/MKK7, MAPK8IP1/JIP1 and MAPK8/JNK1. Mg(2+) serves as cofactor. In terms of processing, dually phosphorylated on Thr-183 and Tyr-185 by MAP2K7 and MAP2K4, which activates the enzyme. Autophosphorylated in vitro.

The protein localises to the cytoplasm. The protein resides in the nucleus. The enzyme catalyses L-seryl-[protein] + ATP = O-phospho-L-seryl-[protein] + ADP + H(+). The catalysed reaction is L-threonyl-[protein] + ATP = O-phospho-L-threonyl-[protein] + ADP + H(+). With respect to regulation, activated by threonine and tyrosine phosphorylation by either of two dual specificity kinases, MAP2K4 and MAP2K7. MAP2K4 shows a strong preference for Tyr-185 while MAP2K7 phosphorylates Tyr-183 preferentially. Inhibited by dual specificity phosphatases, such as DUSP1. Functionally, serine/threonine-protein kinase involved in various processes such as cell proliferation, differentiation, migration, transformation and programmed cell death. Extracellular stimuli such as pro-inflammatory cytokines or physical stress stimulate the stress-activated protein kinase/c-Jun N-terminal kinase (SAP/JNK) signaling pathway. In this cascade, two dual specificity kinases MAP2K4/MKK4 and MAP2K7/MKK7 phosphorylate and activate MAPK9/JNK2. In turn, MAPK9/JNK2 phosphorylates a number of transcription factors, primarily components of AP-1 such as JUN and ATF2 and thus regulates AP-1 transcriptional activity. In response to oxidative or ribotoxic stresses, inhibits rRNA synthesis by phosphorylating and inactivating the RNA polymerase 1-specific transcription initiation factor RRN3. Promotes stressed cell apoptosis by phosphorylating key regulatory factors including TP53 and YAP1. In T-cells, MAPK8 and MAPK9 are required for polarized differentiation of T-helper cells into Th1 cells. Upon T-cell receptor (TCR) stimulation, is activated by CARMA1, BCL10, MAP2K7 and MAP3K7/TAK1 to regulate JUN protein levels. Plays an important role in the osmotic stress-induced epithelial tight-junctions disruption. When activated, promotes beta-catenin/CTNNB1 degradation and inhibits the canonical Wnt signaling pathway. Also participates in neurite growth in spiral ganglion neurons. Phosphorylates the CLOCK-BMAL1 heterodimer and plays a role in the regulation of the circadian clock. Phosphorylates POU5F1, which results in the inhibition of POU5F1's transcriptional activity and enhances its proteasomal degradation. Phosphorylates ALKBH5 in response to reactive oxygen species (ROS), promoting ALKBH5 sumoylation and inactivation. In terms of biological role, MAPK9 isoforms display different binding patterns: alpha-1 and alpha-2 preferentially bind to JUN, whereas beta-1 and beta-2 bind to ATF2. However, there is no correlation between binding and phosphorylation, which is achieved at about the same efficiency by all isoforms. JUNB is not a substrate for JNK2 alpha-2, and JUND binds only weakly to it. The protein is Mitogen-activated protein kinase 9 (MAPK9) of Homo sapiens (Human).